A 266-amino-acid chain; its full sequence is Large ribosomal subunit protein eL8 (266 aa).

Positions 104–130 (PETKQEKKQRLLARAEQKAAGKGDTPT) are enriched in basic and acidic residues. Residues 104 to 135 (PETKQEKKQRLLARAEQKAAGKGDTPTKRPPV) are disordered.

It belongs to the eukaryotic ribosomal protein eL8 family. As to quaternary structure, component of the large ribosomal subunit.

It localises to the cytoplasm. In terms of biological role, component of the large ribosomal subunit. The ribosome is a large ribonucleoprotein complex responsible for the synthesis of proteins in the cell. This Gallus gallus (Chicken) protein is Large ribosomal subunit protein eL8 (RPL7A).